We begin with the raw amino-acid sequence, 186 residues long: Transposons Tn1721 resolvase (186 aa).

Residues 4-137 (HRIGYVRVSS…EGIALAKQRG (134 aa)) form the Resolvase/invertase-type recombinase catalytic domain. Catalysis depends on S12, which acts as the O-(5'-phospho-DNA)-serine intermediate. A DNA-binding region (H-T-H motif) is located at residues 164-183 (KAQLAREFNISRETLYQYLR).

This sequence belongs to the site-specific recombinase resolvase family.

Its function is as follows. Resolvase catalyzes the resolution (a site-specific recombination) of the cointegrated replicon to yield the final transposition products. This is Transposons Tn1721 resolvase (tnpR) from Escherichia coli.